Reading from the N-terminus, the 328-residue chain is Ribosomal protein L11 methyltransferase (328 aa).

S-adenosyl-L-methionine contacts are provided by Thr158, Gly180, Asp202, and Asn246.

It belongs to the methyltransferase superfamily. PrmA family.

The protein localises to the cytoplasm. The enzyme catalyses L-lysyl-[protein] + 3 S-adenosyl-L-methionine = N(6),N(6),N(6)-trimethyl-L-lysyl-[protein] + 3 S-adenosyl-L-homocysteine + 3 H(+). Methylates ribosomal protein L11. In Polynucleobacter necessarius subsp. necessarius (strain STIR1), this protein is Ribosomal protein L11 methyltransferase.